The chain runs to 174 residues: Protein-export protein SecB (174 aa).

The protein belongs to the SecB family. As to quaternary structure, homotetramer, a dimer of dimers. One homotetramer interacts with 1 SecA dimer.

The protein localises to the cytoplasm. Functionally, one of the proteins required for the normal export of preproteins out of the cell cytoplasm. It is a molecular chaperone that binds to a subset of precursor proteins, maintaining them in a translocation-competent state. It also specifically binds to its receptor SecA. The chain is Protein-export protein SecB from Ehrlichia ruminantium (strain Gardel).